A 392-amino-acid chain; its full sequence is MVLSTVNLTLIEELAAQALALEDLTPEQGLLLLQCDDPGGWEVIRQYGDRLRRKLVGETVTYVVNRNINFTNICEQHCNFCAFRRDDGQTGAYWLTDSEIFNKTKGAVAQGATEICLQGGLNPQAKINGSSLAYYVNLVETIKGQFPQLHLHGFSPQEIQFIARQDGLTYGEVLMALKFSGLDSLPGTAAEVLVDRVRRIICPEKIDSQTWLEIIGLAHRHGLPTTSTLMAGHVETPEEIITHLDRLRQRQQTSLAQGYAASITEFILLPFVGEKAPPSLRKRVGRDQPDLDQALQIMAIARLYLGKWIVNHQPSWVKLGLTGATTALEWGCNDLGGTLMEEHITTMAGAKGGTCLTATQLQNAIISTGRPYQQRTTLYEHLNANLNKIGLK.

Residues 60–307 form the Radical SAM core domain; sequence VTYVVNRNIN…MAIARLYLGK (248 aa). Residues Cys74, Cys78, and Cys81 each coordinate [4Fe-4S] cluster.

This sequence belongs to the radical SAM superfamily. CofH family. In terms of assembly, consists of two subunits, CofG and CofH. [4Fe-4S] cluster is required as a cofactor.

The catalysed reaction is 5-amino-6-(D-ribitylamino)uracil + L-tyrosine + S-adenosyl-L-methionine = 5-amino-5-(4-hydroxybenzyl)-6-(D-ribitylimino)-5,6-dihydrouracil + 2-iminoacetate + 5'-deoxyadenosine + L-methionine + H(+). The protein operates within cofactor biosynthesis; coenzyme F0 biosynthesis. In terms of biological role, catalyzes the radical-mediated synthesis of 5-amino-5-(4-hydroxybenzyl)-6-(D-ribitylimino)-5,6-dihydrouracil from 5-amino-6-(D-ribitylamino)uracil and L-tyrosine. The protein is 5-amino-6-(D-ribitylamino)uracil--L-tyrosine 4-hydroxyphenyl transferase of Synechocystis sp. (strain ATCC 27184 / PCC 6803 / Kazusa).